The primary structure comprises 1108 residues: Serine/threonine-protein kinase AKL1 (1108 aa).

Residue S2 is modified to N-acetylserine. S10 is modified (phosphoserine). The Protein kinase domain maps to V35–E319. ATP contacts are provided by residues L41–I49 and K70. Residue D181 is the Proton acceptor of the active site. The disordered stretch occupies residues I405–I466. S407 is modified (phosphoserine). Residues E419–S435 are compositionally biased toward basic and acidic residues. Residues R436–N449 show a composition bias toward low complexity. Residue T471 is modified to Phosphothreonine. Residues K493–P513 are compositionally biased toward polar residues. Residues K493–Y534 form a disordered region. Residue S504 is modified to Phosphoserine. Over residues Q514–Y534 the composition is skewed to low complexity. A phosphoserine mark is found at S541 and S574. Residues Q590 to Q629 show a composition bias toward low complexity. Disordered stretches follow at residues Q590–G663 and E765–S791. Residues N781–S791 show a composition bias toward polar residues. The residue at position 801 (S801) is a Phosphoserine. The interval A807 to N838 is disordered. Positions Q810–Q819 are enriched in polar residues. S846 carries the phosphoserine modification. Positions G858 to K1108 are disordered. Low complexity predominate over residues A859 to S872. Over residues D910 to R934 the composition is skewed to basic and acidic residues. Residues S935 to T976 are compositionally biased toward polar residues. Phosphoserine is present on residues S953 and S960. A compositionally biased stretch (basic and acidic residues) spans E1006–S1048. Glycyl lysine isopeptide (Lys-Gly) (interchain with G-Cter in ubiquitin) cross-links involve residues K1008 and K1046. The residue at position 1048 (S1048) is a Phosphoserine. A compositionally biased stretch (low complexity) spans N1049 to S1060. A compositionally biased stretch (basic and acidic residues) spans Q1071–A1082. A Phosphoserine modification is found at S1072.

It belongs to the protein kinase superfamily. Ser/Thr protein kinase family.

The catalysed reaction is L-seryl-[protein] + ATP = O-phospho-L-seryl-[protein] + ADP + H(+). The enzyme catalyses L-threonyl-[protein] + ATP = O-phospho-L-threonyl-[protein] + ADP + H(+). Functionally, phosphorylates SCD5. The chain is Serine/threonine-protein kinase AKL1 (AKL1) from Saccharomyces cerevisiae (strain ATCC 204508 / S288c) (Baker's yeast).